The following is a 121-amino-acid chain: uncharacterized protein (121 aa).

The next 3 helical transmembrane spans lie at 12 to 32 (MIGIAALAVGIVLGLVFHPGV), 35 to 55 (VIQPYLPIAVVAALDAVFGGL), and 67 to 87 (VFVVSFVFNVLVAALIVYVGD).

This sequence belongs to the sbp family.

It is found in the cell membrane. This is an uncharacterized protein from Mycobacterium bovis (strain ATCC BAA-935 / AF2122/97).